Here is a 1225-residue protein sequence, read N- to C-terminus: DNA-directed RNA polymerase subunit beta' (1225 aa).

Zn(2+) is bound by residues C60, C62, C75, and C78. Mg(2+)-binding residues include D450, D452, and D454. 4 residues coordinate Zn(2+): C818, C892, C899, and C902.

Belongs to the RNA polymerase beta' chain family. As to quaternary structure, the RNAP catalytic core consists of 2 alpha, 1 beta, 1 beta' and 1 omega subunit. When a sigma factor is associated with the core the holoenzyme is formed, which can initiate transcription. Mg(2+) is required as a cofactor. The cofactor is Zn(2+).

It catalyses the reaction RNA(n) + a ribonucleoside 5'-triphosphate = RNA(n+1) + diphosphate. In terms of biological role, DNA-dependent RNA polymerase catalyzes the transcription of DNA into RNA using the four ribonucleoside triphosphates as substrates. The polypeptide is DNA-directed RNA polymerase subunit beta' (Streptococcus pneumoniae (strain ATCC 700669 / Spain 23F-1)).